The primary structure comprises 393 residues: Staphopain B (393 aa).

A signal peptide spans 1-36; the sequence is MNSSCKTRVFNIISIIMVSMLILSLGAFANNNKAKA. Residues 37–219 constitute a propeptide that is removed on maturation; the sequence is DSHSKQLEIN…KVEENEAIQE (183 aa). Catalysis depends on residues C243, H340, and N360.

This sequence belongs to the peptidase C47 family. In terms of assembly, in the cytoplasm, prematurely activated/folded SspB forms a stable non-covalent complex with SspC. In terms of processing, proteolytically cleaved by staphylococcal serine protease (SspA).

It is found in the secreted. With respect to regulation, prematurely activated/folded staphopain B is inhibited by staphostatin B (SspC), which is probably required to protect staphylococcal cytoplasmic proteins from degradation by SspB. Cysteine protease that plays an important role in the inhibition of host innate immune response. Degrades host elastin, fibrogen, fibronectin and kininogen. Blocks phagocytosis of opsonised S.aureus by neutrophils and monocytes by inducing their death in a proteolytic activity-dependent manner. Decreases surface expression of the 'don't eat me' signal CD31 on neutrophils. Cleaves host galectin-3/LGALS3, thereby inhibiting the neutrophil-activating ability of the lectin. The protein is Staphopain B (sspB) of Staphylococcus aureus (strain MRSA252).